Reading from the N-terminus, the 544-residue chain is Serine/threonine-protein kinase bur1 (544 aa).

One can recognise a Protein kinase domain in the interval 25–326 (FEFLGKLGEG…AIDALKHPYF (302 aa)). ATP contacts are provided by residues 31–39 (LGEGTFGEV) and K54. The active-site Proton acceptor is the D155. Residues 357–544 (AAMPPAPAGG…ERVDRGPYRR (188 aa)) are disordered. The span at 374-403 (GGWSTNSGSRTGAETRNPRISSAARSQGNQ) shows a compositional bias: polar residues. Composition is skewed to basic and acidic residues over residues 419 to 438 (RGNE…HRDG), 456 to 466 (HSDKTGRDRGY), 488 to 511 (DRNR…DKSH), and 532 to 544 (NYRE…PYRR).

This sequence belongs to the protein kinase superfamily. CMGC Ser/Thr protein kinase family. CDC2/CDKX subfamily.

It is found in the nucleus. The catalysed reaction is L-seryl-[protein] + ATP = O-phospho-L-seryl-[protein] + ADP + H(+). It carries out the reaction L-threonyl-[protein] + ATP = O-phospho-L-threonyl-[protein] + ADP + H(+). It catalyses the reaction [DNA-directed RNA polymerase] + ATP = phospho-[DNA-directed RNA polymerase] + ADP + H(+). In terms of biological role, serine/threonine-protein kinase involved in transcription regulation. Phosphorylates the UBC2/RAD6 ubiquitin-conjugating enzyme (E2), leading to monoubiquitination of histone H2B and the silencing of telomeric-associated genes. Also required for histone H3 methylation. Necessary for the recovery from pheromone-induced growth arrest in the cell cycle G1 phase. The polypeptide is Serine/threonine-protein kinase bur1 (ptkA) (Emericella nidulans (strain FGSC A4 / ATCC 38163 / CBS 112.46 / NRRL 194 / M139) (Aspergillus nidulans)).